A 164-amino-acid chain; its full sequence is UPF0304 protein KPK_1463 (164 aa).

The protein belongs to the UPF0304 family.

The protein is UPF0304 protein KPK_1463 of Klebsiella pneumoniae (strain 342).